Reading from the N-terminus, the 524-residue chain is Inorganic phosphate transporter 1-1 (524 aa).

At methionine 1–alanine 24 the chain is on the cytoplasmic side. The chain crosses the membrane as a helical span at residues isoleucine 25–valine 45. The Extracellular segment spans residues threonine 46 to alanine 70. A helical membrane pass occupies residues alanine 71–leucine 91. The Cytoplasmic segment spans residues glycine 92–lysine 99. Residues valine 100–glycine 120 form a helical membrane-spanning segment. Residues histidine 121–cysteine 131 are Extracellular-facing. Residues phenylalanine 132 to methionine 152 traverse the membrane as a helical segment. The Cytoplasmic portion of the chain corresponds to serine 153 to arginine 161. The chain crosses the membrane as a helical span at residues glycine 162–valine 182. The Extracellular segment spans residues alanine 183–valine 211. Residues aspartate 212 to tryptophan 232 form a helical membrane-spanning segment. Residues arginine 233–arginine 292 lie on the Cytoplasmic side of the membrane. Residues histidine 293 to serine 313 form a helical membrane-spanning segment. Residues glutamine 314 to threonine 348 are Extracellular-facing. The helical transmembrane segment at leucine 349–isoleucine 369 threads the bilayer. Over glycine 370–arginine 371 the chain is Cytoplasmic. A helical transmembrane segment spans residues phenylalanine 372–proline 392. The Extracellular segment spans residues tyrosine 393–arginine 402. Residues isoleucine 403–threonine 423 form a helical membrane-spanning segment. Residues threonine 424–histidine 441 are Cytoplasmic-facing. Residues glycine 442–alanine 462 form a helical membrane-spanning segment. The Extracellular segment spans residues alanine 463–serine 484. The chain crosses the membrane as a helical span at residues leucine 485–proline 505. Residues lysine 506–lysine 524 lie on the Cytoplasmic side of the membrane.

The protein belongs to the major facilitator superfamily. Phosphate:H(+) symporter (TC 2.A.1.9) family. Interacts with NLA. In terms of processing, ubiquitinated by NLA. Ubiquitination of PHT1-1 leads to its degradation by the proteasome. As to expression, mostly expressed in roots, especially in trichoblasts and in emerging secondary roots and root hairs, but not in root tips. Also present in hydathodes, axillary buds and peripheral endosperm of germinating seeds.

It localises to the cell membrane. With respect to regulation, inhibited by protonophores (e.g. 2,4-dinitrophenol and carbonylcyanide m-chlorophenylhydrazone), the plasma membrane H(+)-ATPase inhibitor diethylstilbestorol, and the phosphate analog arsenate. In terms of biological role, high-affinity transporter for external inorganic phosphate. Acts as a H(+):phosphate symporter in both low- and high-Pi conditions. Confers sensitivity to arsenate. This is Inorganic phosphate transporter 1-1 (PHT1-1) from Arabidopsis thaliana (Mouse-ear cress).